A 2449-amino-acid chain; its full sequence is Nonribisomal peptide synthetase phqB (2449 aa).

Positions 253 to 654 (IQVHSGPGRL…GRRDTVVKIR (402 aa)) are adenylation 1. Positions 795–870 (LPMTPNEDVL…LRTVAKEARP (76 aa)) constitute a Carrier 1 domain. Ser815 is modified (O-(pantetheine 4'-phosphoryl)serine). The condensation 1 stretch occupies residues 913 to 1337 (QDIYPTTPLQ…LISDRDSELL (425 aa)). Residues 1357 to 1756 (EAQVTRNPSK…TFTFLGRTNQ (400 aa)) are adenylation 2. Positions 1915–1993 (WALSKHIGQL…MVAEMIDRTP (79 aa)) constitute a Carrier 2 domain. Ser1952 is modified (O-(pantetheine 4'-phosphoryl)serine). The tract at residues 2041-2297 (LTGATGFLGT…VAAVDWVASL (257 aa)) is reductase (R) domain. NADPH is bound by residues Thr2045, Met2249, and Asn2259.

The protein belongs to the NRP synthetase family.

It participates in alkaloid biosynthesis. Its function is as follows. Nonribisomal peptide synthetase; part of the gene cluster that mediates the biosynthesis of paraherquamide, a fungal indole alkaloid that belongs to a family of natural products containing a characteristic bicyclo[2.2.2]diazaoctane core. The first steps in the biosynthesis of paraherquamide is the production of the beta-methyl-proline precursor from L-isoleucine. They require oxidation of a terminally hydroxylated L-isoleucine to the corresponding aldehyde by enzymes which have still to be identified. Spontaneous cyclization and dehydration would yield the 4-methyl pyrolline-5-carboxylic acid, which is then reduced by the pyrroline-5-carboxylate reductase phqD leading to the beta-methyl-proline precursor. The next step of paraherquamide biosynthesis involves coupling of beta-methyl-proline and L-tryptophan by the bimodular NRPS phqB, to produce a monooxopiperazine intermediate. The reductase (R) domain of phqB utilizes NADPH for hydride transfer to reduce the thioester bond of the T domain-tethered linear dipeptide to a hemithioaminal intermediate, which spontaneously cleaves the C-S bond to release the aldehyde product. This compound undergoes spontaneous cyclization and dehydration to give a dienamine which is reverse prenylated at C-2 by the reverse prenyltransferase phqJ. The other prenyltransferase present in the cluster, phqI may be a redundant gene in the pathway. During biosynthetic assembly, the key step to produce the polycyclic core is catalyzed by the bifunctional reductase and intramolecular [4+2] Diels-Alderase, phqE, resulting in formation of the [2.2.2] diazaoctane intermediate preparaherquamide. Following formation of preparaherquamide, an indole 2,3-epoxidation-initiated pinacol-like rearrangement is catalyzed by the phqK FAD-dependent monooxygenase. The prenyltransferase phqA, the cytochrome P450 monooxygenase phqL, and the FAD-linked oxidoreductase phqH (or the cytochrome P450 monooxygenase phqM), are proposed to be involved in the formation of the pyran ring. The FAD-dependent monooxygenase phqK is likely responsible for generation of the spiro-oxindole, and the N-methylation is likely mediated by the phqN methyltransferase leading to the isolable natural product paraherquamide F. However, the order of these biosynthetic steps has still to be determined. In late-stage paraherquamide biosynthesis, the third P450 monooxygenase, phqO, is probably responsible for the C-14 hydroxylation, transforming paraherquamide F to paraherquamide G, and paraherquamide E to the final product paraherquamide A. The expansion from the 6-membered ring pyran (in paraherquamides F and G) to the 7-membered dioxepin ring (in paraherquamides A and E) represents a poorly understood but intriguing process that probably involves the 2-oxoglutarate-dependent dioxygenase phqC. Finally, the remaining members of the paraherquamide cluster, including phqI as well as phqM (or phqH), do not have a clearly prescribed role and appear to be redundant. In Penicillium fellutanum, this protein is Nonribisomal peptide synthetase phqB.